A 253-amino-acid polypeptide reads, in one-letter code: Prolactin-7A2 (253 aa).

Positions 1 to 30 (MSFSFSQPCPSGALLLVVVSSLLLWENVAS) are cleaved as a signal peptide. N-linked (GlcNAc...) asparagine glycosylation is found at Asn36, Asn103, and Asn135. 2 disulfides stabilise this stretch: Cys101–Cys218 and Cys235–Cys244.

It belongs to the somatotropin/prolactin family. As to expression, expression restricted to the placental tissue. Expressed only in the spongiotrophoblasts.

The protein localises to the secreted. The protein is Prolactin-7A2 (Prl7a2) of Mus musculus (Mouse).